A 246-amino-acid polypeptide reads, in one-letter code: Small ribosomal subunit protein uS2 (246 aa).

It belongs to the universal ribosomal protein uS2 family.

The protein is Small ribosomal subunit protein uS2 of Burkholderia thailandensis (strain ATCC 700388 / DSM 13276 / CCUG 48851 / CIP 106301 / E264).